The sequence spans 193 residues: Potassium-transporting ATPase KdpC subunit (193 aa).

Residues 14–34 traverse the membrane as a helical segment; sequence ITFTFLVLCGLVYPLIVTGIA.

This sequence belongs to the KdpC family. As to quaternary structure, the system is composed of three essential subunits: KdpA, KdpB and KdpC.

The protein resides in the cell membrane. In terms of biological role, part of the high-affinity ATP-driven potassium transport (or Kdp) system, which catalyzes the hydrolysis of ATP coupled with the electrogenic transport of potassium into the cytoplasm. This subunit acts as a catalytic chaperone that increases the ATP-binding affinity of the ATP-hydrolyzing subunit KdpB by the formation of a transient KdpB/KdpC/ATP ternary complex. This Bacillus cereus (strain AH820) protein is Potassium-transporting ATPase KdpC subunit.